The primary structure comprises 195 residues: Molybdenum cofactor guanylyltransferase (195 aa).

GTP is bound by residues 12 to 14, lysine 25, asparagine 53, aspartate 70, and aspartate 100; that span reads LAG. Aspartate 100 is a binding site for Mg(2+).

This sequence belongs to the MobA family. As to quaternary structure, monomer. Mg(2+) serves as cofactor.

It is found in the cytoplasm. It catalyses the reaction Mo-molybdopterin + GTP + H(+) = Mo-molybdopterin guanine dinucleotide + diphosphate. Its function is as follows. Transfers a GMP moiety from GTP to Mo-molybdopterin (Mo-MPT) cofactor (Moco or molybdenum cofactor) to form Mo-molybdopterin guanine dinucleotide (Mo-MGD) cofactor. In Vibrio vulnificus (strain YJ016), this protein is Molybdenum cofactor guanylyltransferase.